The primary structure comprises 564 residues: MPKVEIYKSILLEKIGKNLTNYELESIIETAKAEICEIDIVNDKIKIEFNDTNRPDLWSSAGLARHIKTYLSGNVPSFDFFSMTDNLQKFYGEIFVSPEVFGIRPFIFGFLAKGMICDERMLEILIQLQEKLSHNYGQKRKRVAMGMYSSNLINFPINYVTCSSDYKFVPLGMDIEMSIKEINEKHPKGIEYSPIFENVDQYSLLLDYKNNVLSYPPIINSRDIGTLKVGDTNLFIEVTGTDLEATLLSLSIVACDLYDMGFKILPVKTVFPKETLFGKEIICPYYFQNSLKINVDSVNKLLGSNFTANDMCLDLKKLGISAYFEESDTFYIMPPVYRNDFLHEVDVIEEVMIGKGLDNFKSELPKDFTIGKLSPIEEFSRSVRNLMIGMGFQEMIYNYLGSKVDFIEKMNIKGSELLSVSNPMTESYEYIRGSIISDLLKSESISSNFPYPHKIFEIGKVALKDLVSDEGTVTYDNLAFLMADKEFSFNEINSLVSSLFYYLNIGFKVKESSKNLYIDGRGADILVNDIVLGSFGEVSPYILSNFGIMVPCCVLEININGLLH.

In terms of domain architecture, B5 spans 286–362; that stretch reads YFQNSLKINV…IGKGLDNFKS (77 aa). Residues D340, D346, E349, and E350 each contribute to the Mg(2+) site.

The protein belongs to the phenylalanyl-tRNA synthetase beta subunit family. Type 2 subfamily. In terms of assembly, tetramer of two alpha and two beta subunits. The cofactor is Mg(2+).

Its subcellular location is the cytoplasm. It catalyses the reaction tRNA(Phe) + L-phenylalanine + ATP = L-phenylalanyl-tRNA(Phe) + AMP + diphosphate + H(+). This is Phenylalanine--tRNA ligase beta subunit from Borrelia duttonii (strain Ly).